Consider the following 399-residue polypeptide: S-adenosylmethionine synthase (399 aa).

His15 contacts ATP. Residue Asp17 coordinates Mg(2+). Glu43 contacts K(+). L-methionine contacts are provided by Glu56 and Gln99. A flexible loop region spans residues 99–109 (QSADIAQGVDN). Residues 174-176 (DGK), 244-245 (RF), Asp253, 259-260 (RK), Ala276, and Lys280 each bind ATP. Asp253 lines the L-methionine pocket. Lys284 contributes to the L-methionine binding site.

This sequence belongs to the AdoMet synthase family. As to quaternary structure, homotetramer; dimer of dimers. It depends on Mg(2+) as a cofactor. Requires K(+) as cofactor.

The protein localises to the cytoplasm. It carries out the reaction L-methionine + ATP + H2O = S-adenosyl-L-methionine + phosphate + diphosphate. It functions in the pathway amino-acid biosynthesis; S-adenosyl-L-methionine biosynthesis; S-adenosyl-L-methionine from L-methionine: step 1/1. Its function is as follows. Catalyzes the formation of S-adenosylmethionine (AdoMet) from methionine and ATP. The overall synthetic reaction is composed of two sequential steps, AdoMet formation and the subsequent tripolyphosphate hydrolysis which occurs prior to release of AdoMet from the enzyme. This chain is S-adenosylmethionine synthase, found in Salinispora tropica (strain ATCC BAA-916 / DSM 44818 / JCM 13857 / NBRC 105044 / CNB-440).